Reading from the N-terminus, the 158-residue chain is MEKALKIDTPQQGSIQDINHRVWVLQDQTLIAVPRKDRMSPVTIALISCRHVETLEKDRGNPIYLGLNGLNLCLMCAKVGDQPTLQLKEKDIMDLYNQPEPVKSFLFYHSQSGRNSTFESVAFPGWFIAVSSEGGCPLILTQELGKANTTDFGLTMLF.

The propeptide occupies 1–5 (MEKAL). Tyr-96 carries the post-translational modification 3'-nitrotyrosine.

Belongs to the IL-1 family. As to quaternary structure, interacts with TMED10; the interaction mediates the translocation from the cytoplasm into the ERGIC (endoplasmic reticulum-Golgi intermediate compartment) and thereby secretion. In terms of processing, N-terminal truncation leads to a dramatic enhancement of its activity (&gt;1000-fold). In terms of tissue distribution, expressed in immune system and fetal brain, but not in other tissues tested or in multiple hematopoietic cell lines. Predominantly expressed in skin keratinocytes but not in fibroblasts, endothelial cells or melanocytes. Increased in lesional psoriasis skin.

It is found in the cytoplasm. The protein localises to the secreted. Functionally, cytokine that binds to and signals through the IL1RL2/IL-36R receptor which in turn activates NF-kappa-B and MAPK signaling pathways in target cells linked to a pro-inflammatory response. Part of the IL-36 signaling system that is thought to be present in epithelial barriers and to take part in local inflammatory response; similar to the IL-1 system with which it shares the coreceptor IL1RAP. Seems to be involved in skin inflammatory response by acting on keratinocytes, dendritic cells and indirectly on T-cells to drive tissue infiltration, cell maturation and cell proliferation. In cultured keratinocytes induces the expression of macrophage, T-cell, and neutrophil chemokines, such as CCL3, CCL4, CCL5, CCL2, CCL17, CCL22, CL20, CCL5, CCL2, CCL17, CCL22, CXCL8, CCL20 and CXCL1, and the production of pro-inflammatory cytokines such as TNF-alpha, IL-8 and IL-6. In cultured monocytes up-regulates expression of IL-1A, IL-1B and IL-6. In myeloid dendritic cells involved in cell maturation by up-regulating surface expression of CD83, CD86 and HLA-DR. In monocyte-derived dendritic cells facilitates dendritic cell maturation and drives T-cell proliferation. May play a role in pro-inflammatory effects in the lung. The chain is Interleukin-36 alpha from Homo sapiens (Human).